The following is a 718-amino-acid chain: Probable trehalose-phosphatase (718 aa).

Residues 449–470 (LSMDQTGHKKVDAKKKPGIRKK) form a disordered region. A compositionally biased stretch (basic residues) spans 459–470 (VDAKKKPGIRKK).

The protein in the N-terminal section; belongs to the glycosyltransferase 20 family. It in the C-terminal section; belongs to the trehalose phosphatase family.

The enzyme catalyses alpha,alpha-trehalose 6-phosphate + H2O = alpha,alpha-trehalose + phosphate. In Encephalitozoon cuniculi (strain GB-M1) (Microsporidian parasite), this protein is Probable trehalose-phosphatase.